The following is a 21-amino-acid chain: Preblooming protein 2 (21 aa).

In terms of biological role, possible mediator for cell division in the blooming process. The protein is Preblooming protein 2 of Prorocentrum triestinum (Red tide alga).